The sequence spans 409 residues: Protein a6 (409 aa).

Ser86 bears the Phosphoserine mark. The span at 106-120 shows a compositional bias: basic residues; sequence RAHRTGRRQAPRRAA. Residues 106–165 are disordered; that stretch reads RAHRTGRRQAPRRAATHSYPVTDSILITSDDEHNEQEPSSTARVRSQLSMRSPPPLAPLT. The residue at position 133 (Thr133) is a Phosphothreonine. Ser134 bears the Phosphoserine mark. The span at 142 to 155 shows a compositional bias: polar residues; that stretch reads EPSSTARVRSQLSM.

The chain is Protein a6 (a6) from Drosophila melanogaster (Fruit fly).